The chain runs to 186 residues: ATP synthase subunit delta (186 aa).

Belongs to the ATPase delta chain family. As to quaternary structure, F-type ATPases have 2 components, F(1) - the catalytic core - and F(0) - the membrane proton channel. F(1) has five subunits: alpha(3), beta(3), gamma(1), delta(1), epsilon(1). F(0) has three main subunits: a(1), b(2) and c(10-14). The alpha and beta chains form an alternating ring which encloses part of the gamma chain. F(1) is attached to F(0) by a central stalk formed by the gamma and epsilon chains, while a peripheral stalk is formed by the delta and b chains.

It is found in the cellular chromatophore membrane. Its function is as follows. F(1)F(0) ATP synthase produces ATP from ADP in the presence of a proton or sodium gradient. F-type ATPases consist of two structural domains, F(1) containing the extramembraneous catalytic core and F(0) containing the membrane proton channel, linked together by a central stalk and a peripheral stalk. During catalysis, ATP synthesis in the catalytic domain of F(1) is coupled via a rotary mechanism of the central stalk subunits to proton translocation. Functionally, this protein is part of the stalk that links CF(0) to CF(1). It either transmits conformational changes from CF(0) to CF(1) or is implicated in proton conduction. The sequence is that of ATP synthase subunit delta from Rhodobacter capsulatus (Rhodopseudomonas capsulata).